Consider the following 665-residue polypeptide: UvrABC system protein B (665 aa).

Residues 31–414 (DGVKGGEKAQ…EMEQTETVVQ (384 aa)) form the Helicase ATP-binding domain. 44–51 (GATGTGKT) is a binding site for ATP. Positions 97-120 (YYDYYQPEAYVPSSDTYIEKDSSI) match the Beta-hairpin motif. Positions 435–601 (QIDDLVGEIH…TIIKEIRDLI (167 aa)) constitute a Helicase C-terminal domain. The UVR domain occupies 629 to 664 (ADLLMKLEREMKDAAKALDFETAATLRDTILELKAA).

This sequence belongs to the UvrB family. Forms a heterotetramer with UvrA during the search for lesions. Interacts with UvrC in an incision complex.

Its subcellular location is the cytoplasm. In terms of biological role, the UvrABC repair system catalyzes the recognition and processing of DNA lesions. A damage recognition complex composed of 2 UvrA and 2 UvrB subunits scans DNA for abnormalities. Upon binding of the UvrA(2)B(2) complex to a putative damaged site, the DNA wraps around one UvrB monomer. DNA wrap is dependent on ATP binding by UvrB and probably causes local melting of the DNA helix, facilitating insertion of UvrB beta-hairpin between the DNA strands. Then UvrB probes one DNA strand for the presence of a lesion. If a lesion is found the UvrA subunits dissociate and the UvrB-DNA preincision complex is formed. This complex is subsequently bound by UvrC and the second UvrB is released. If no lesion is found, the DNA wraps around the other UvrB subunit that will check the other stand for damage. This chain is UvrABC system protein B, found in Enterococcus faecalis (strain ATCC 700802 / V583).